A 136-amino-acid chain; its full sequence is Small ribosomal subunit protein uS11c (136 aa).

The protein belongs to the universal ribosomal protein uS11 family. As to quaternary structure, part of the 30S ribosomal subunit.

It is found in the plastid. The protein localises to the chloroplast. The protein is Small ribosomal subunit protein uS11c of Helianthus annuus (Common sunflower).